The sequence spans 390 residues: GTPase Obg (390 aa).

Residues 1-159 form the Obg domain; that stretch reads MKFVDEASIL…RELLLELMLL (159 aa). The tract at residues 127–147 is disordered; it reads NTRFKSSVNRTPRQKTNGTPG. Positions 129-145 are enriched in polar residues; sequence RFKSSVNRTPRQKTNGT. An OBG-type G domain is found at 160-333; the sequence is ADVGMLGMPN…LCWDVMTFII (174 aa). GTP contacts are provided by residues 166 to 173, 191 to 195, 213 to 216, 283 to 286, and 314 to 316; these read GMPNAGKS, FTTLV, DIPG, NKID, and SAA. Mg(2+) is bound by residues S173 and T193.

The protein belongs to the TRAFAC class OBG-HflX-like GTPase superfamily. OBG GTPase family. Monomer. Mg(2+) serves as cofactor.

Its subcellular location is the cytoplasm. Its function is as follows. An essential GTPase which binds GTP, GDP and possibly (p)ppGpp with moderate affinity, with high nucleotide exchange rates and a fairly low GTP hydrolysis rate. Plays a role in control of the cell cycle, stress response, ribosome biogenesis and in those bacteria that undergo differentiation, in morphogenesis control. The chain is GTPase Obg from Shigella dysenteriae serotype 1 (strain Sd197).